Consider the following 189-residue polypeptide: Apolipoprotein D (189 aa).

Positions 1 to 20 are cleaved as a signal peptide; the sequence is MVMLLLLLSALAGLFGAAEG. Gln21 carries the pyrrolidone carboxylic acid modification. 2 cysteine pairs are disulfide-bonded: Cys28/Cys134 and Cys61/Cys185. Asn65 and Asn98 each carry an N-linked (GlcNAc...) (complex) asparagine glycan.

This sequence belongs to the calycin superfamily. Lipocalin family. In terms of assembly, homodimer. In plasma, also exists as a disulfide-linked heterodimer with APOA2. Post-translationally, N-glycosylated. N-glycan heterogeneity at Asn-65: Hex5HexNAc4 (major) and Hex6HexNAc5 (minor); at Asn-98: Hex5HexNAc4 (minor), dHex1Hex5HexNAc4 (major), dHex1Hex6HexNAc5 (minor) and dHex1Hex7HexNAc6 (minor). In terms of tissue distribution, expressed in liver, intestine, pancreas, kidney, placenta, adrenal, spleen, fetal brain tissue and tears.

It is found in the secreted. In terms of biological role, APOD occurs in the macromolecular complex with lecithin-cholesterol acyltransferase. It is probably involved in the transport and binding of bilin. Appears to be able to transport a variety of ligands in a number of different contexts. The protein is Apolipoprotein D (APOD) of Homo sapiens (Human).